Here is a 70-residue protein sequence, read N- to C-terminus: Putative membrane protein insertion efficiency factor (70 aa).

It belongs to the UPF0161 family.

Its subcellular location is the cell membrane. Functionally, could be involved in insertion of integral membrane proteins into the membrane. The sequence is that of Putative membrane protein insertion efficiency factor from Clostridium novyi (strain NT).